The sequence spans 339 residues: Glyceraldehyde-3-phosphate dehydrogenase (339 aa).

NAD(+) is bound by residues 12-13 (RI), aspartate 34, and lysine 79. D-glyceraldehyde 3-phosphate-binding positions include 150-152 (SCT), threonine 181, 210-211 (TG), and arginine 233. The Nucleophile role is filled by cysteine 151. NAD(+) is bound at residue asparagine 316.

It belongs to the glyceraldehyde-3-phosphate dehydrogenase family. In terms of assembly, homotetramer.

It is found in the cytoplasm. It carries out the reaction D-glyceraldehyde 3-phosphate + phosphate + NAD(+) = (2R)-3-phospho-glyceroyl phosphate + NADH + H(+). Its pathway is carbohydrate degradation; glycolysis; pyruvate from D-glyceraldehyde 3-phosphate: step 1/5. This chain is Glyceraldehyde-3-phosphate dehydrogenase (GPD), found in Cryptococcus neoformans var. neoformans serotype D (strain B-3501A) (Filobasidiella neoformans).